The sequence spans 105 residues: Large ribosomal subunit protein uL23 (105 aa).

This sequence belongs to the universal ribosomal protein uL23 family. As to quaternary structure, part of the 50S ribosomal subunit. Contacts protein L29, and trigger factor when it is bound to the ribosome.

One of the early assembly proteins it binds 23S rRNA. One of the proteins that surrounds the polypeptide exit tunnel on the outside of the ribosome. Forms the main docking site for trigger factor binding to the ribosome. This chain is Large ribosomal subunit protein uL23, found in Herminiimonas arsenicoxydans.